We begin with the raw amino-acid sequence, 364 residues long: Fructose-bisphosphate aldolase A (364 aa).

Y5 is subject to Phosphotyrosine. T9 carries the post-translational modification Phosphothreonine. 2 positions are modified to phosphoserine: S36 and S39. The residue at position 42 (K42) is an N6-acetyllysine; alternate. A Glycyl lysine isopeptide (Lys-Gly) (interchain with G-Cter in SUMO1); alternate cross-link involves residue K42. Residue K42 forms a Glycyl lysine isopeptide (Lys-Gly) (interchain with G-Cter in SUMO2); alternate linkage. R43 provides a ligand contact to beta-D-fructose 1,6-bisphosphate. S46 bears the Phosphoserine mark. K99 is modified (N6-(2-hydroxyisobutyryl)lysine). Position 108 is an N6-acetyllysine (K108). The residue at position 111 (K111) is an N6-acetyllysine; alternate. An N6-malonyllysine; alternate modification is found at K111. S132 carries the post-translational modification Phosphoserine. K147 carries the N6-(2-hydroxyisobutyryl)lysine modification. Catalysis depends on E188, which acts as the Proton acceptor. The active-site Schiff-base intermediate with dihydroxyacetone-P is K230. Position 272 is a phosphoserine (S272). Beta-D-fructose 1,6-bisphosphate-binding positions include 272 to 274, S301, and R304; that span reads SGG. Position 312 is an N6-malonyllysine (K312). At K330 the chain carries N6-acetyllysine.

The protein belongs to the class I fructose-bisphosphate aldolase family. As to quaternary structure, homotetramer. Interacts with SNX9 and WAS. Interacts with FBP2; the interaction blocks FBP2 inhibition by physiological concentrations of AMP and reduces inhibition by Ca(2+).

Its subcellular location is the cytoplasm. It localises to the myofibril. The protein resides in the sarcomere. The protein localises to the i band. It is found in the m line. The catalysed reaction is beta-D-fructose 1,6-bisphosphate = D-glyceraldehyde 3-phosphate + dihydroxyacetone phosphate. It functions in the pathway carbohydrate degradation; glycolysis; D-glyceraldehyde 3-phosphate and glycerone phosphate from D-glucose: step 4/4. Its function is as follows. Catalyzes the reversible conversion of beta-D-fructose 1,6-bisphosphate (FBP) into two triose phosphate and plays a key role in glycolysis and gluconeogenesis. In addition, may also function as scaffolding protein. In Homo sapiens (Human), this protein is Fructose-bisphosphate aldolase A.